Here is a 278-residue protein sequence, read N- to C-terminus: Sulfur carrier protein FdhD (278 aa).

The Cysteine persulfide intermediate role is filled by Cys-117.

This sequence belongs to the FdhD family.

It is found in the cytoplasm. Functionally, required for formate dehydrogenase (FDH) activity. Acts as a sulfur carrier protein that transfers sulfur from IscS to the molybdenum cofactor prior to its insertion into FDH. This Variovorax paradoxus (strain S110) protein is Sulfur carrier protein FdhD.